An 888-amino-acid chain; its full sequence is Interference hedgehog (888 aa).

The signal sequence occupies residues 1–24; the sequence is MSLTRFSLCLLLTLLLAAIPVYLA. Over 25-688 the chain is Extracellular; sequence SPDPGVRILR…SHNETFNLNP (664 aa). Ig-like C2-type domains lie at 28–123, 134–215, 234–321, and 327–414; these read PGVR…ARLE, EGFK…VRLA, PHLL…SIQL, and PRIV…LQVN. Disulfide bonds link C51/C106, C155/C203, and C257/C305. 8 N-linked (GlcNAc...) asparagine glycosylation sites follow: N80, N185, N192, N281, N336, N365, N369, and N455. C348 and C396 are disulfide-bonded. 2 Fibronectin type-III domains span residues 450 to 557 and 565 to 660; these read PPSA…LQRG and VPSL…TQRP. Positions 486 and 493 each coordinate heparin. An N-linked (GlcNAc...) asparagine glycan is attached at N516. R531 serves as a coordination point for heparin. N-linked (GlcNAc...) asparagine glycosylation occurs at N547. The segment covering 655–667 has biased composition (polar residues); sequence GRTQRPRVSTTTE. The tract at residues 655-679 is disordered; sequence GRTQRPRVSTTTEPAVHAMDTTTPS. N681 is a glycosylation site (N-linked (GlcNAc...) asparagine). Residues 689 to 709 traverse the membrane as a helical segment; the sequence is LLTGTIGGGALLVLLVVSACL. The Cytoplasmic segment spans residues 710–888; the sequence is CLCRRRSSRG…SSGSLNSVGV (179 aa). Disordered regions lie at residues 759 to 789, 812 to 864, and 869 to 888; these read AQQQ…DMSY, SSSL…PGRV, and ARLS…SVGV. Residues 760-775 show a composition bias toward low complexity; the sequence is QQQQQQQQQQQQQQQQ. Positions 843–859 are enriched in polar residues; that stretch reads QPTDGSTADSPRLQASN. Residues 872–888 show a composition bias toward low complexity; sequence SSRSENLSSGSLNSVGV.

This sequence belongs to the immunoglobulin superfamily. IHOG family. Homodimer. Heterotetramer; 2 iHog chains bind 2 hh chains when facilitated by heparin, heparin is required to promote high-affinity interactions between hh and iHog.

It localises to the membrane. Functionally, mediates response to the active Hedgehog (Hh) protein signal in embryos, functioning upstream or at the level of patched (ptc). This Drosophila grimshawi (Hawaiian fruit fly) protein is Interference hedgehog.